Consider the following 150-residue polypeptide: Macrodomain Ter protein (150 aa).

Belongs to the MatP family. Homodimer.

It is found in the cytoplasm. In terms of biological role, required for spatial organization of the terminus region of the chromosome (Ter macrodomain) during the cell cycle. Prevents early segregation of duplicated Ter macrodomains during cell division. Binds specifically to matS, which is a 13 bp signature motif repeated within the Ter macrodomain. This Citrobacter koseri (strain ATCC BAA-895 / CDC 4225-83 / SGSC4696) protein is Macrodomain Ter protein.